Here is a 281-residue protein sequence, read N- to C-terminus: MSHADLARTIEAAWEDRASVGPTTQGTVREAVEAALALLDSGQARVAEKSGSADWQVNQWLKKAVLLSFRLNDMSVIPGGPGGAAWWDKVPSKFEGWDADRFRAAGFRAVPGAVVRRGSYIAPGAVLMPSFVNLGAYVGEGTMVDTWATIGSCAQVGKNCHISGGAGIAGVLEPLQANPVIIEDNCFIGARAEVAEGVIVGEGSVLSMGVYIGASTKIIDRATGEVMYGRVPPYSVVVSGTQPGKPLPDGTPGPSLYCAVIVKRVDAGTRAKTGINELLRD.

The substrate site is built by Arg-108 and Asp-145.

Belongs to the transferase hexapeptide repeat family. In terms of assembly, homotrimer.

The protein resides in the cytoplasm. It catalyses the reaction (S)-2,3,4,5-tetrahydrodipicolinate + succinyl-CoA + H2O = (S)-2-succinylamino-6-oxoheptanedioate + CoA. Its pathway is amino-acid biosynthesis; L-lysine biosynthesis via DAP pathway; LL-2,6-diaminopimelate from (S)-tetrahydrodipicolinate (succinylase route): step 1/3. The chain is 2,3,4,5-tetrahydropyridine-2,6-dicarboxylate N-succinyltransferase from Methylobacterium nodulans (strain LMG 21967 / CNCM I-2342 / ORS 2060).